We begin with the raw amino-acid sequence, 567 residues long: Proline--tRNA ligase (567 aa).

This sequence belongs to the class-II aminoacyl-tRNA synthetase family. ProS type 1 subfamily. In terms of assembly, homodimer.

Its subcellular location is the cytoplasm. It catalyses the reaction tRNA(Pro) + L-proline + ATP = L-prolyl-tRNA(Pro) + AMP + diphosphate. Its function is as follows. Catalyzes the attachment of proline to tRNA(Pro) in a two-step reaction: proline is first activated by ATP to form Pro-AMP and then transferred to the acceptor end of tRNA(Pro). As ProRS can inadvertently accommodate and process non-cognate amino acids such as alanine and cysteine, to avoid such errors it has two additional distinct editing activities against alanine. One activity is designated as 'pretransfer' editing and involves the tRNA(Pro)-independent hydrolysis of activated Ala-AMP. The other activity is designated 'posttransfer' editing and involves deacylation of mischarged Ala-tRNA(Pro). The misacylated Cys-tRNA(Pro) is not edited by ProRS. In Idiomarina loihiensis (strain ATCC BAA-735 / DSM 15497 / L2-TR), this protein is Proline--tRNA ligase.